The chain runs to 102 residues: uncharacterized protein (102 aa).

The segment at 79–102 (AELLHPSPAPMPPATHGRSAAPCS) is disordered.

This is an uncharacterized protein from Homo sapiens (Human).